Consider the following 251-residue polypeptide: Derlin-1 (251 aa).

Serine 2 is subject to N-acetylserine. Residues 2–15 (SDIGDWFRSIPTIT) lie on the Cytoplasmic side of the membrane. A helical membrane pass occupies residues 16 to 31 (RYWFAATVAVPLVGKL). Residues 32–69 (GLISPAYFFLWPEAFLYRFQIWRPITATFYFPVGPGTG) are Lumenal-facing. A helical transmembrane segment spans residues 70-89 (FLYLVNLYFLYQYSTRLETG). Residues 90-94 (AFDGR) lie on the Cytoplasmic side of the membrane. Residues 95-115 (PADYLFMLLFNWICIVITGLA) traverse the membrane as a helical segment. The Lumenal portion of the chain corresponds to 116 to 122 (MDMQLLM). Residues 123–137 (IPLIMSVLYVWAQLN) form a helical membrane-spanning segment. Over 138-154 (RDMIVSFWFGTRFKACY) the chain is Cytoplasmic. A helical transmembrane segment spans residues 155–166 (LPWVILGFNYII). Over 167–170 (GGSV) the chain is Lumenal. Residues 171-189 (INELIGNLVGHLYFFLMFR) traverse the membrane as a helical segment. Residues 190–251 (YPMDLGGRNF…WGQGFRLGDQ (62 aa)) lie on the Cytoplasmic side of the membrane. Residue serine 201 is modified to Phosphoserine. Threonine 202 bears the Phosphothreonine mark. At serine 226 the chain carries Phosphoserine. The interval 229–251 (RAADQNGGGGRHNWGQGFRLGDQ) is disordered. Positions 241–248 (NWGQGFRL) match the SHP-box motif.

The protein belongs to the derlin family. In terms of assembly, homotetramer. The four subunits of the tetramer are arranged in a twofold symmetry. Forms homo- and heterooligomers with DERL2 and DERL3; binding to DERL3 is poorer than that between DERL2 and DERL3. Interacts (via SHP-box motif) with VCP. Interacts with AMFR, SELENOS, SEL1L, SELENOK and SYVN1, as well as with SEL1L-SYVN1 and VCP-SELENOS protein complexes; this interaction is weaker than that observed between DERL2 and these complexes. Interacts with NGLY1 and YOD1. Does not bind to EDEM1. Interacts with DNAJB9. Interacts with RNF103. Interacts with HM13. Interacts with XBP1 isoform 1 (via luminal/ectodomain domain); the interaction obviates the need for ectodomain shedding prior HM13/SPP-mediated XBP1 isoform 1 cleavage. Interacts with the signal recognition particle/SRP and the SRP receptor; in the process of endoplasmic reticulum stress-induced pre-emptive quality control. May interact with UBXN6. Interacts with ZFAND2B; probably through VCP. Interacts with CCDC47. Interacts with C18orf32. May interact with TRAM1. Forms a complex with SVIP and VCP/p97.

The protein localises to the endoplasmic reticulum membrane. In terms of biological role, functional component of endoplasmic reticulum-associated degradation (ERAD) for misfolded lumenal proteins. Forms homotetramers which encircle a large channel traversing the endoplasmic reticulum (ER) membrane. This allows the retrotranslocation of misfolded proteins from the ER into the cytosol where they are ubiquitinated and degraded by the proteasome. The channel has a lateral gate within the membrane which provides direct access to membrane proteins with no need to reenter the ER lumen first. May mediate the interaction between VCP and the misfolded protein. Also involved in endoplasmic reticulum stress-induced pre-emptive quality control, a mechanism that selectively attenuates the translocation of newly synthesized proteins into the endoplasmic reticulum and reroutes them to the cytosol for proteasomal degradation. By controlling the steady-state expression of the IGF1R receptor, indirectly regulates the insulin-like growth factor receptor signaling pathway. This Bos taurus (Bovine) protein is Derlin-1.